The sequence spans 176 residues: Co-chaperone protein HscB homolog (176 aa).

Residues 8–80 (DFFALFGLPV…LRRATYLLKL (73 aa)) form the J domain.

This sequence belongs to the HscB family. As to quaternary structure, interacts with HscA and stimulates its ATPase activity.

Functionally, co-chaperone involved in the maturation of iron-sulfur cluster-containing proteins. Seems to help targeting proteins to be folded toward HscA. The protein is Co-chaperone protein HscB homolog of Cupriavidus taiwanensis (strain DSM 17343 / BCRC 17206 / CCUG 44338 / CIP 107171 / LMG 19424 / R1) (Ralstonia taiwanensis (strain LMG 19424)).